The sequence spans 125 residues: MEHKFVFIALAGALGTLARYSLAGFVQQFNSSFFPFGTLVVNITGCFAAGFLWTLFESRWAVSGEVRTFVLVGFMGAFTTFSAFILETGMLVRSTEWIYGIVNLLLQNSLGFGALMAGIVLGRLI.

4 helical membrane-spanning segments follow: residues 5–25, 33–53, 69–89, and 101–121; these read FVFI…LAGF, FFPF…GFLW, FVLV…LETG, and IVNL…GIVL. Residues G76 and T79 each coordinate Na(+).

This sequence belongs to the fluoride channel Fluc/FEX (TC 1.A.43) family.

The protein resides in the cell inner membrane. The catalysed reaction is fluoride(in) = fluoride(out). With respect to regulation, na(+) is not transported, but it plays an essential structural role and its presence is essential for fluoride channel function. Fluoride-specific ion channel. Important for reducing fluoride concentration in the cell, thus reducing its toxicity. The chain is Fluoride-specific ion channel FluC from Desulforapulum autotrophicum (strain ATCC 43914 / DSM 3382 / VKM B-1955 / HRM2) (Desulfobacterium autotrophicum).